We begin with the raw amino-acid sequence, 231 residues long: Hypoxanthine-guanine-xanthine phosphoribosyltransferase (231 aa).

GMP contacts are provided by residues lysine 77, 144–152 (EDIIDTGKT), lysine 176, and aspartate 204. Aspartate 148 (proton acceptor) is an active-site residue. Mg(2+) is bound at residue aspartate 204.

It belongs to the purine/pyrimidine phosphoribosyltransferase family. As to quaternary structure, homotetramer. Requires Mg(2+) as cofactor.

The protein resides in the cytoplasm. The catalysed reaction is IMP + diphosphate = hypoxanthine + 5-phospho-alpha-D-ribose 1-diphosphate. It carries out the reaction GMP + diphosphate = guanine + 5-phospho-alpha-D-ribose 1-diphosphate. The enzyme catalyses XMP + diphosphate = xanthine + 5-phospho-alpha-D-ribose 1-diphosphate. The protein operates within purine metabolism; GMP biosynthesis via salvage pathway; GMP from guanine: step 1/1. It participates in purine metabolism; IMP biosynthesis via salvage pathway; IMP from hypoxanthine: step 1/1. Its pathway is purine metabolism; XMP biosynthesis via salvage pathway; XMP from xanthine: step 1/1. Its function is as follows. Catalyzes the transfer of a ribosyl phosphate group from 5-phosphoribose 1-diphosphate to the N(9) of hypoxanthine, guanine or xanthine, leading to IMP, GMP and XMP, respectively. Plays a central role in the generation of purine nucleotides through the purine salvage pathway. In Plasmodium falciparum (isolate K1 / Thailand), this protein is Hypoxanthine-guanine-xanthine phosphoribosyltransferase (LACZ).